The sequence spans 201 residues: Small ribosomal subunit protein uS10m (201 aa).

It belongs to the universal ribosomal protein uS10 family. Component of the mitochondrial small ribosomal subunit (mt-SSU). Mature mammalian 55S mitochondrial ribosomes consist of a small (28S) and a large (39S) subunit. The 28S small subunit contains a 12S ribosomal RNA (12S mt-rRNA) and 30 different proteins. The 39S large subunit contains a 16S rRNA (16S mt-rRNA), a copy of mitochondrial valine transfer RNA (mt-tRNA(Val)), which plays an integral structural role, and 52 different proteins.

It is found in the mitochondrion. The protein is Small ribosomal subunit protein uS10m (MRPS10) of Homo sapiens (Human).